The sequence spans 540 residues: Phosphoenolpyruvate carboxykinase (ATP) (540 aa).

Residue arginine 65 coordinates substrate. Lysine 87 carries the N6-acetyllysine modification. Substrate contacts are provided by tyrosine 207 and lysine 213. Residues lysine 213, histidine 232, and 248–256 each bind ATP; that span reads GLSGTGKTT. Residues lysine 213 and histidine 232 each coordinate Mn(2+). Aspartate 269 serves as a coordination point for Mn(2+). ATP is bound by residues glutamate 297, arginine 333, 449–450, and threonine 455; that span reads RI. Residue arginine 333 participates in substrate binding. Lysine 523 is modified (N6-acetyllysine).

The protein belongs to the phosphoenolpyruvate carboxykinase (ATP) family. Monomer. The cofactor is Mn(2+).

The protein localises to the cytoplasm. The enzyme catalyses oxaloacetate + ATP = phosphoenolpyruvate + ADP + CO2. It functions in the pathway carbohydrate biosynthesis; gluconeogenesis. Functionally, involved in the gluconeogenesis. Catalyzes the conversion of oxaloacetate (OAA) to phosphoenolpyruvate (PEP) through direct phosphoryl transfer between the nucleoside triphosphate and OAA. This is Phosphoenolpyruvate carboxykinase (ATP) from Shigella flexneri serotype 5b (strain 8401).